Reading from the N-terminus, the 517-residue chain is L-amino-acid oxidase (517 aa).

An N-terminal signal peptide occupies residues 1–18 (MNVFFMFSLLFLAALGSC). Cys-29 and Cys-192 form a disulfide bridge. FAD-binding positions include 62–63 (MA), 82–83 (EA), Arg-90, and 106–109 (GPMR). Residue Arg-109 participates in substrate binding. The N-linked (GlcNAc...) asparagine glycan is linked to Asn-191. Val-280 contributes to the FAD binding site. Residues Cys-350 and Cys-431 are joined by a disulfide bond. Position 391 (Tyr-391) interacts with substrate. Residues Glu-476 and 483 to 488 (GWLDST) each bind FAD. A substrate-binding site is contributed by 483-484 (GW).

The protein belongs to the flavin monoamine oxidase family. FIG1 subfamily. Homodimer; non-covalently linked. FAD is required as a cofactor. In terms of processing, N-glycosylated. Expressed by the venom gland.

It localises to the secreted. It carries out the reaction an L-alpha-amino acid + O2 + H2O = a 2-oxocarboxylate + H2O2 + NH4(+). Functionally, catalyzes an oxidative deamination of predominantly hydrophobic and aromatic L-amino acids, thus producing hydrogen peroxide that may contribute to the diverse toxic effects of this enzyme. Exhibits diverse biological activities, such as hemorrhage, hemolysis, edema, apoptosis of vascular endothelial cells or tumor cell lines, antiparasitic activities, as well as regulation of platelet aggregation. Effects of snake L-amino oxidases on platelets are controversial, since they either induce aggregation or inhibit agonist-induced aggregation. These different effects are probably due to different experimental conditions. This protein has antibacterial activities. The protein is L-amino-acid oxidase of Pseudechis australis (Mulga snake).